A 106-amino-acid chain; its full sequence is Pyrimidine/purine nucleoside phosphorylase (106 aa).

The protein belongs to the nucleoside phosphorylase PpnP family.

The enzyme catalyses a purine D-ribonucleoside + phosphate = a purine nucleobase + alpha-D-ribose 1-phosphate. The catalysed reaction is adenosine + phosphate = alpha-D-ribose 1-phosphate + adenine. It carries out the reaction cytidine + phosphate = cytosine + alpha-D-ribose 1-phosphate. It catalyses the reaction guanosine + phosphate = alpha-D-ribose 1-phosphate + guanine. The enzyme catalyses inosine + phosphate = alpha-D-ribose 1-phosphate + hypoxanthine. The catalysed reaction is thymidine + phosphate = 2-deoxy-alpha-D-ribose 1-phosphate + thymine. It carries out the reaction uridine + phosphate = alpha-D-ribose 1-phosphate + uracil. It catalyses the reaction xanthosine + phosphate = alpha-D-ribose 1-phosphate + xanthine. In terms of biological role, catalyzes the phosphorolysis of diverse nucleosides, yielding D-ribose 1-phosphate and the respective free bases. Can use uridine, adenosine, guanosine, cytidine, thymidine, inosine and xanthosine as substrates. Also catalyzes the reverse reactions. The sequence is that of Pyrimidine/purine nucleoside phosphorylase from Burkholderia vietnamiensis (strain G4 / LMG 22486) (Burkholderia cepacia (strain R1808)).